We begin with the raw amino-acid sequence, 368 residues long: Cytochrome-c peroxidase IdrP2 (368 aa).

The signal sequence occupies residues 1–27 (MKWHRGRLTQTLGAMGLTATLTVAAQA). Cytochrome c domains follow at residues 48–158 (AMIE…ALWQ) and 201–346 (KEAQ…LTLS). Positions 70, 73, 74, 216, 219, and 220 each coordinate heme c.

As to quaternary structure, the iodate reductase (Idr) complex is composed of a molybdopterin-dependent iodate reductase (IdrA and IdrB subunits) and two associated peroxidases (IdrP1 and IdrP2). Heme c is required as a cofactor.

It is found in the periplasm. It carries out the reaction 2 Fe(II)-[cytochrome c] + H2O2 + 2 H(+) = 2 Fe(III)-[cytochrome c] + 2 H2O. Functionally, involved in iodate respiration. Probably reduces the H(2)O(2) produced by IdrA/IdrB to H(2)O, using a reduced cytochrome c as the electron donor. The polypeptide is Cytochrome-c peroxidase IdrP2 (Pseudomonas sp. (strain SCT)).